The sequence spans 257 residues: 5'-nucleotidase SurE (257 aa).

A divalent metal cation contacts are provided by Asp13, Asp14, Ser44, and Asn100.

The protein belongs to the SurE nucleotidase family. A divalent metal cation serves as cofactor.

Its subcellular location is the cytoplasm. The enzyme catalyses a ribonucleoside 5'-phosphate + H2O = a ribonucleoside + phosphate. In terms of biological role, nucleotidase that shows phosphatase activity on nucleoside 5'-monophosphates. This is 5'-nucleotidase SurE from Phocaeicola vulgatus (strain ATCC 8482 / DSM 1447 / JCM 5826 / CCUG 4940 / NBRC 14291 / NCTC 11154) (Bacteroides vulgatus).